Here is a 299-residue protein sequence, read N- to C-terminus: ATP phosphoribosyltransferase (299 aa).

This sequence belongs to the ATP phosphoribosyltransferase family. Long subfamily. The cofactor is Mg(2+).

The protein resides in the cytoplasm. The catalysed reaction is 1-(5-phospho-beta-D-ribosyl)-ATP + diphosphate = 5-phospho-alpha-D-ribose 1-diphosphate + ATP. The protein operates within amino-acid biosynthesis; L-histidine biosynthesis; L-histidine from 5-phospho-alpha-D-ribose 1-diphosphate: step 1/9. Feedback inhibited by histidine. In terms of biological role, catalyzes the condensation of ATP and 5-phosphoribose 1-diphosphate to form N'-(5'-phosphoribosyl)-ATP (PR-ATP). Has a crucial role in the pathway because the rate of histidine biosynthesis seems to be controlled primarily by regulation of HisG enzymatic activity. The sequence is that of ATP phosphoribosyltransferase from Shewanella oneidensis (strain ATCC 700550 / JCM 31522 / CIP 106686 / LMG 19005 / NCIMB 14063 / MR-1).